The following is a 488-amino-acid chain: Prostaglandin E2 receptor EP4 subtype (488 aa).

At 1-19 the chain is on the extracellular side; the sequence is MSIPGVNASFSSTPERLNS. N-linked (GlcNAc...) asparagine glycosylation occurs at N7. A helical membrane pass occupies residues 20–43; the sequence is PVTIPAVMFIFGVVGNLVAIVVLC. Topologically, residues 44–55 are cytoplasmic; it reads KSRKEQKETTFY. Residues 56–79 traverse the membrane as a helical segment; sequence TLVCGLAVTDLLGTLLVSPVTIAT. Topologically, residues 80–96 are extracellular; sequence YMKGQWPGDQALCDYST. A disulfide bridge connects residues C92 and C170. The helical transmembrane segment at 97–115 threads the bilayer; that stretch reads FILLFFGLSGLSIICAMSI. Residues 116–135 are Cytoplasmic-facing; sequence ERYLAINHAYFYSHYVDKRL. Residues 136–160 traverse the membrane as a helical segment; the sequence is AGLTLFAVYASNVLFCALPNMGLGR. The Extracellular portion of the chain corresponds to 161–184; that stretch reads SERQYPGTWCFIDWTTNVTAYAAF. The chain crosses the membrane as a helical span at residues 185–211; the sequence is SYMYAGFSSFLILATVLCNVLVCGALL. Topologically, residues 212–270 are cytoplasmic; the sequence is RMLRQFMRRTSLGTEQHHAAAAAAVASVACRGHAAASPALQRLSDFRRRRSFRRIAGAE. The helical transmembrane segment at 271–298 threads the bilayer; it reads IQMVILLIATSLVVLICSIPLVVRVFIN. Residues 299–315 are Extracellular-facing; sequence QLYQPSVVKDISRNPDL. A helical membrane pass occupies residues 316-335; it reads QAIRIASVNPILDPWIYILL. The Cytoplasmic portion of the chain corresponds to 336–488; that stretch reads RKTVLSKAIE…ETLKLSEKCI (153 aa). Residues 358-380 are disordered; the sequence is GRDGSAQHCSESRRTSSAMSGHS. S377, S380, S382, and S385 each carry phosphoserine.

This sequence belongs to the G-protein coupled receptor 1 family. As to quaternary structure, interacts with FEM1A. Post-translationally, phosphorylation mediates agonist-mediated desensitization by promoting cytoplasmic retention.

The protein resides in the cell membrane. In terms of biological role, receptor for prostaglandin E2 (PGE2). The activity of this receptor is mediated by G(s) proteins that stimulate adenylate cyclase. Has a relaxing effect on smooth muscle. May play an important role in regulating renal hemodynamics, intestinal epithelial transport, adrenal aldosterone secretion, and uterine function. This Rattus norvegicus (Rat) protein is Prostaglandin E2 receptor EP4 subtype (Ptger4).